Here is a 65-residue protein sequence, read N- to C-terminus: Antitoxin VapB32 (65 aa).

Residues 46–65 form a disordered region; it reads ALGGTDPQATAAPRRRTSPR.

Functionally, antitoxin component of a type II toxin-antitoxin (TA) system. This Mycobacterium tuberculosis (strain CDC 1551 / Oshkosh) protein is Antitoxin VapB32 (vapB32).